Here is a 427-residue protein sequence, read N- to C-terminus: 3-phosphoshikimate 1-carboxyvinyltransferase (427 aa).

Residues K20, S21, and R25 each contribute to the 3-phosphoshikimate site. Position 20 (K20) interacts with phosphoenolpyruvate. Phosphoenolpyruvate-binding residues include G92 and R120. The 3-phosphoshikimate site is built by S166, Q168, D312, and K339. Q168 contributes to the phosphoenolpyruvate binding site. The Proton acceptor role is filled by D312. Positions 343 and 385 each coordinate phosphoenolpyruvate.

It belongs to the EPSP synthase family. As to quaternary structure, monomer.

The protein localises to the cytoplasm. The enzyme catalyses 3-phosphoshikimate + phosphoenolpyruvate = 5-O-(1-carboxyvinyl)-3-phosphoshikimate + phosphate. The protein operates within metabolic intermediate biosynthesis; chorismate biosynthesis; chorismate from D-erythrose 4-phosphate and phosphoenolpyruvate: step 6/7. Functionally, catalyzes the transfer of the enolpyruvyl moiety of phosphoenolpyruvate (PEP) to the 5-hydroxyl of shikimate-3-phosphate (S3P) to produce enolpyruvyl shikimate-3-phosphate and inorganic phosphate. This is 3-phosphoshikimate 1-carboxyvinyltransferase from Streptococcus pneumoniae (strain Hungary19A-6).